A 540-amino-acid polypeptide reads, in one-letter code: Chaperonin GroEL (540 aa).

ATP-binding positions include 29 to 32 (TLGP), 86 to 90 (DGTTT), Gly-413, 476 to 478 (NAA), and Asp-492.

Belongs to the chaperonin (HSP60) family. Forms a cylinder of 14 subunits composed of two heptameric rings stacked back-to-back. Interacts with the co-chaperonin GroES.

The protein localises to the cytoplasm. The catalysed reaction is ATP + H2O + a folded polypeptide = ADP + phosphate + an unfolded polypeptide.. Its function is as follows. Together with its co-chaperonin GroES, plays an essential role in assisting protein folding. The GroEL-GroES system forms a nano-cage that allows encapsulation of the non-native substrate proteins and provides a physical environment optimized to promote and accelerate protein folding. The sequence is that of Chaperonin GroEL from Streptococcus gordonii (strain Challis / ATCC 35105 / BCRC 15272 / CH1 / DL1 / V288).